A 179-amino-acid chain; its full sequence is Large ribosomal subunit protein uL6 (179 aa).

It belongs to the universal ribosomal protein uL6 family. Part of the 50S ribosomal subunit.

Functionally, this protein binds to the 23S rRNA, and is important in its secondary structure. It is located near the subunit interface in the base of the L7/L12 stalk, and near the tRNA binding site of the peptidyltransferase center. The sequence is that of Large ribosomal subunit protein uL6 from Mycobacteroides abscessus (strain ATCC 19977 / DSM 44196 / CCUG 20993 / CIP 104536 / JCM 13569 / NCTC 13031 / TMC 1543 / L948) (Mycobacterium abscessus).